Consider the following 98-residue polypeptide: NADH-ubiquinone oxidoreductase chain 4L (98 aa).

3 helical membrane-spanning segments follow: residues Met-1–Met-21, Leu-31–Ile-51, and Ile-61–Val-81.

Belongs to the complex I subunit 4L family. Core subunit of respiratory chain NADH dehydrogenase (Complex I) which is composed of 45 different subunits.

The protein resides in the mitochondrion inner membrane. The catalysed reaction is a ubiquinone + NADH + 5 H(+)(in) = a ubiquinol + NAD(+) + 4 H(+)(out). Functionally, core subunit of the mitochondrial membrane respiratory chain NADH dehydrogenase (Complex I) which catalyzes electron transfer from NADH through the respiratory chain, using ubiquinone as an electron acceptor. Part of the enzyme membrane arm which is embedded in the lipid bilayer and involved in proton translocation. The polypeptide is NADH-ubiquinone oxidoreductase chain 4L (MT-ND4L) (Chalinolobus tuberculatus (New Zealand long-tailed bat)).